Here is a 142-residue protein sequence, read N- to C-terminus: Hemoglobin subunit alpha-3 (142 aa).

The 141-residue stretch at 2 to 142 (VLSAADKSNV…VSTVLTSKYR (141 aa)) folds into the Globin domain. O2 is bound at residue histidine 59. Heme b is bound at residue histidine 88.

This sequence belongs to the globin family. As to quaternary structure, heterotetramer of two alpha chains and two beta chains. Red blood cells.

In terms of biological role, involved in oxygen transport from the lung to the various peripheral tissues. The polypeptide is Hemoglobin subunit alpha-3 (Bubalus bubalis (Domestic water buffalo)).